The chain runs to 167 residues: Leptin (167 aa).

Positions 1 to 21 (MRCGPLYRFLWLWPYLSYVEA) are cleaved as a signal peptide. A disulfide bond links Cys-117 and Cys-167.

It belongs to the leptin family.

Its subcellular location is the secreted. Functionally, key player in the regulation of energy balance and body weight control. Once released into the circulation, has central and peripheral effects by binding LEPR, found in many tissues, which results in the activation of several major signaling pathways. In the hypothalamus, acts as an appetite-regulating factor that induces a decrease in food intake and an increase in energy consumption by inducing anorexinogenic factors and suppressing orexigenic neuropeptides, also regulates bone mass and secretion of hypothalamo-pituitary-adrenal hormones. In the periphery, increases basal metabolism, influences reproductive function, regulates pancreatic beta-cell function and insulin secretion, is pro-angiogenic for endothelial cell and affects innate and adaptive immunity. In the arcuate nucleus of the hypothalamus, activates by depolarization POMC neurons inducing FOS and SOCS3 expression to release anorexigenic peptides and inhibits by hyperpolarization NPY neurons inducing SOCS3 with a consequent reduction on release of orexigenic peptides. In addition to its known satiety inducing effect, has a modulatory role in nutrient absorption. In the intestine, reduces glucose absorption by enterocytes by activating PKC and leading to a sequential activation of p38, PI3K and ERK signaling pathways which exerts an inhibitory effect on glucose absorption. Acts as a growth factor on certain tissues, through the activation of different signaling pathways increases expression of genes involved in cell cycle regulation such as CCND1, via JAK2-STAT3 pathway, or VEGFA, via MAPK1/3 and PI3K-AKT1 pathways. May also play an apoptotic role via JAK2-STAT3 pathway and up-regulation of BIRC5 expression. Pro-angiogenic, has mitogenic activity on vascular endothelial cells and plays a role in matrix remodeling by regulating the expression of matrix metalloproteinases (MMPs) and tissue inhibitors of metalloproteinases (TIMPs). In innate immunity, modulates the activity and function of neutrophils by increasing chemotaxis and the secretion of oxygen radicals. Increases phagocytosis by macrophages and enhances secretion of pro-inflammatory mediators. Increases cytotoxic ability of NK cells. Plays a pro-inflammatory role, in synergy with IL1B, by inducing NOS2 which promotes the production of IL6, IL8 and Prostaglandin E2, through a signaling pathway that involves JAK2, PI3K, MAP2K1/MEK1 and MAPK14/p38. In adaptive immunity, promotes the switch of memory T-cells towards T helper-1 cell immune responses. Increases CD4(+)CD25(-) T-cell proliferation and reduces autophagy during TCR (T-cell receptor) stimulation, through MTOR signaling pathway activation and BCL2 up-regulation. The chain is Leptin (LEP) from Capra hircus (Goat).